Consider the following 860-residue polypeptide: Leucine--tRNA ligase (860 aa).

The short motif at 42–52 (PYPSGRLHMGH) is the 'HIGH' region element. Positions 619-623 (KMSKS) match the 'KMSKS' region motif. An ATP-binding site is contributed by Lys622.

It belongs to the class-I aminoacyl-tRNA synthetase family.

It localises to the cytoplasm. The enzyme catalyses tRNA(Leu) + L-leucine + ATP = L-leucyl-tRNA(Leu) + AMP + diphosphate. This chain is Leucine--tRNA ligase, found in Cronobacter sakazakii (strain ATCC BAA-894) (Enterobacter sakazakii).